Consider the following 216-residue polypeptide: MIF4G domain-containing protein A (216 aa).

Positions 2 to 199 (DSAWTALDME…LEILEFRASG (198 aa)) constitute an MIF4G domain.

Belongs to the MIF4GD family. In terms of assembly, interacts with eif4g1, eif4g2 and slbp; probably tethered by SLBP to the 3'-end of mRNAs ending with the histone stem-loop, it also interacts with eif4g1 which is bound to their 5'-end.

It is found in the cytoplasm. The protein resides in the nucleus. Its function is as follows. Functions in replication-dependent translation of histone mRNAs which differ from other eukaryotic mRNAs in that they do not end with a poly-A tail but a stem-loop. May participate in circularizing those mRNAs specifically enhancing their translation. In Danio rerio (Zebrafish), this protein is MIF4G domain-containing protein A (mif4gda).